The sequence spans 90 residues: MSSGGLLLLLGLLTLWAELTPVSGKKRPDFCYLPADTGPCMANFPRFYYDSASKKCKKFTYGGCHGNANNFETREECRKKCFASAARRPT.

The first 24 residues, 1 to 24, serve as a signal peptide directing secretion; sequence MSSGGLLLLLGLLTLWAELTPVSG. The BPTI/Kunitz inhibitor domain occupies 31–81; it reads CYLPADTGPCMANFPRFYYDSASKKCKKFTYGGCHGNANNFETREECRKKC. 3 cysteine pairs are disulfide-bonded: Cys-31-Cys-81, Cys-40-Cys-64, and Cys-56-Cys-77.

This sequence belongs to the venom Kunitz-type family. Expressed by the venom gland.

The protein resides in the secreted. Functionally, serine protease inhibitor. In Bitis gabonica (Gaboon adder), this protein is Kunitz-type serine protease inhibitor bitisilin-2.